The chain runs to 808 residues: Putative dimethyl sulfoxide reductase chain YnfE (808 aa).

Positions 1-43 (MSKNERMVGISRRTLVKSTAIGSLALAAGGFSLPFTLRNAAAA) form a signal peptide, tat-type signal. Positions 49–110 (EKVVWGACSV…SIRRRINHPD (62 aa)) constitute a 4Fe-4S Mo/W bis-MGD-type domain. Positions 56, 60, 64, and 96 each coordinate [4Fe-4S] cluster. S196 lines the Mo-bis(molybdopterin guanine dinucleotide) pocket.

The protein belongs to the prokaryotic molybdopterin-containing oxidoreductase family. [4Fe-4S] cluster is required as a cofactor. Requires Mo-bis(molybdopterin guanine dinucleotide) as cofactor. Exported by the Tat system. The position of the signal peptide cleavage has not been experimentally proven.

It localises to the cell membrane. Its function is as follows. Terminal reductase during anaerobic growth on various sulfoxide and N-oxide compounds. In Escherichia coli (strain K12), this protein is Putative dimethyl sulfoxide reductase chain YnfE (ynfE).